Consider the following 251-residue polypeptide: Developmental protein SEPALLATA 3 (251 aa).

The 55-residue stretch at 3–57 (RGRVELKRIENKINRQVTFAKRRNGLLKKAYELSVLCDAEVALIIFSNRGKLYEF) folds into the MADS-box domain. In terms of domain architecture, K-box spans 91 to 181 (ELSSQQEYLK…RLRLADGYQM (91 aa)). A coiled-coil region spans residues 94 to 177 (SQQEYLKLKE…NKTLRLRLAD (84 aa)).

Forms homodimers. Heterodimer with AP1 or AG capable of binding to CArG-box sequences. Binds AP3/PI to form a ternary complex. Interacts with AGL16. Interacts with TT16/AGL32.

It localises to the nucleus. Probable transcription factor active in inflorescence development and floral organogenesis. Functions with SEPALLATA1/AGL2 and SEPALLATA2/AGL4 to ensure proper development of petals, stamens and carpels and to prevent the indeterminate growth of the flower meristem. Interacts with APETALA1, AGAMOUS or APETALA3/PISTILLATA to form complexes, that could be involved in genes regulation during floral meristem development. Binds specifically to the CArG box DNA sequence 5'-CC (A/T)6 GG-3'. This is Developmental protein SEPALLATA 3 (SEP3) from Arabidopsis thaliana (Mouse-ear cress).